We begin with the raw amino-acid sequence, 319 residues long: Glycine--tRNA ligase alpha subunit (319 aa).

Belongs to the class-II aminoacyl-tRNA synthetase family. As to quaternary structure, tetramer of two alpha and two beta subunits.

It localises to the cytoplasm. It catalyses the reaction tRNA(Gly) + glycine + ATP = glycyl-tRNA(Gly) + AMP + diphosphate. This is Glycine--tRNA ligase alpha subunit from Oenococcus oeni (strain ATCC BAA-331 / PSU-1).